Reading from the N-terminus, the 340-residue chain is MTKPIILTGDRPTGKLHLGHYVGSLKNRVFLQNENKYKMFVFLADQQALTDHAKESELIQESIGNVALDYLSVGLDPKQSTIFIQSQIPELAELSMYYMNLVSLARLERNPTVKTEIAQKGFGESIPSGFLVYPVSQAADITAFKANLVPVGNDQKPMIEQTREIVRSFNHTYHTDCLVEPEGIYPENEKAGRLPGLDGNAKMSKSLGNGIYLSDDADTVRKKVMSMYTDPNHIKIEDPGQIEGNMVFHYLDIFARKEDQADIEAMKEHYQRGGLGDVKTKRYLLDILERELAPIRERRLEYAKDMGEVFRMLQEGSQKARTVAAKTLSEVKSAMGINYF.

Residues 11 to 13 (RPT) and 19 to 20 (GH) each bind ATP. A 'HIGH' region motif is present at residues 12-20 (PTGKLHLGH). Asp-140 contacts L-tryptophan. ATP-binding positions include 152–154 (GND), Leu-194, and 202–206 (KMSKS). The 'KMSKS' region motif lies at 202–206 (KMSKS).

The protein belongs to the class-I aminoacyl-tRNA synthetase family. In terms of assembly, homodimer.

It localises to the cytoplasm. The catalysed reaction is tRNA(Trp) + L-tryptophan + ATP = L-tryptophyl-tRNA(Trp) + AMP + diphosphate + H(+). Catalyzes the attachment of tryptophan to tRNA(Trp). The chain is Tryptophan--tRNA ligase from Streptococcus pyogenes serotype M3 (strain ATCC BAA-595 / MGAS315).